We begin with the raw amino-acid sequence, 231 residues long: Sugar fermentation stimulation protein homolog (231 aa).

The protein belongs to the SfsA family.

In Geobacter sp. (strain M21), this protein is Sugar fermentation stimulation protein homolog.